The following is a 38-amino-acid chain: Photosystem II reaction center protein L (38 aa).

A helical transmembrane segment spans residues 17–37 (SLFIGLLLVLVLALLFSSYFF).

Belongs to the PsbL family. As to quaternary structure, PSII is composed of 1 copy each of membrane proteins PsbA, PsbB, PsbC, PsbD, PsbE, PsbF, PsbH, PsbI, PsbJ, PsbK, PsbL, PsbM, PsbT, PsbX, PsbY, PsbZ, Psb30/Ycf12, peripheral proteins PsbO, CyanoQ (PsbQ), PsbU, PsbV and a large number of cofactors. It forms dimeric complexes.

It localises to the cellular thylakoid membrane. In terms of biological role, one of the components of the core complex of photosystem II (PSII). PSII is a light-driven water:plastoquinone oxidoreductase that uses light energy to abstract electrons from H(2)O, generating O(2) and a proton gradient subsequently used for ATP formation. It consists of a core antenna complex that captures photons, and an electron transfer chain that converts photonic excitation into a charge separation. This subunit is found at the monomer-monomer interface and is required for correct PSII assembly and/or dimerization. This chain is Photosystem II reaction center protein L, found in Acaryochloris marina (strain MBIC 11017).